A 491-amino-acid polypeptide reads, in one-letter code: E3 ubiquitin-protein ligase Hakai (491 aa).

Positions 1–61 are disordered; it reads MDHTDNELQG…PAKAPPGDEE (61 aa). The segment at 109-149 adopts an RING-type zinc-finger fold; the sequence is CDKCGLPIKIYGRMIPCKHVFCYDCAILHEKKGDKMCPGCS. An HYB domain region spans residues 148–206; the sequence is CSDPVQRIEQCTRGSLFMCSIVQGCKRTYLSQRDLQAHINHRHMRAGKPVTRASLENVH. Residues 164 to 190 form a C2H2-type zinc finger; sequence FMCSIVQGCKRTYLSQRDLQAHINHRH. 3 positions are modified to phosphoserine: serine 201, serine 285, and serine 290. The interval 255-491 is disordered; sequence QPHEDIRAPP…DQTRYRPYYQ (237 aa). Composition is skewed to pro residues over residues 342–359, 372–389, and 399–423; these read APPP…PHPP, APPP…PPPG, and MNHP…PPHH. Residues 427-442 show a composition bias toward polar residues; it reads NSLPQFTEDQGTLSPP. The segment covering 457–478 has biased composition (pro residues); the sequence is PRGPPPPPRLQGPPSQTPLPGP.

Belongs to the Hakai family. Homodimer. Interacts with tyrosine-phosphorylated SRC substrates. Component of the WMM complex, a N6-methyltransferase complex composed of a catalytic subcomplex, named MAC, and of an associated subcomplex, named MACOM. The MAC subcomplex is composed of METTL3 and METTL14. The MACOM subcomplex is composed of WTAP, ZC3H13, CBLL1/HAKAI, VIRMA, and, in some cases of RBM15 (RBM15 or RBM15B). Also a component of a MACOM-like complex, named WTAP complex, composed of WTAP, ZC3H13, CBLL1, VIRMA, RBM15, BCLAF1 and THRAP3. In terms of processing, phosphorylated on tyrosine residues.

The protein localises to the nucleus speckle. The protein resides in the nucleus. It localises to the nucleoplasm. It is found in the cytoplasm. The catalysed reaction is S-ubiquitinyl-[E2 ubiquitin-conjugating enzyme]-L-cysteine + [acceptor protein]-L-lysine = [E2 ubiquitin-conjugating enzyme]-L-cysteine + N(6)-ubiquitinyl-[acceptor protein]-L-lysine.. Its pathway is protein modification; protein ubiquitination. In terms of biological role, E3 ubiquitin-protein ligase that mediates ubiquitination of several tyrosine-phosphorylated Src substrates, including CDH1, CTTN and DOK1. Targets CDH1 for endocytosis and degradation. Associated component of the WMM complex, a complex that mediates N6-methyladenosine (m6A) methylation of RNAs, a modification that plays a role in the efficiency of mRNA splicing and RNA processing. Its function in the WMM complex is unknown. The polypeptide is E3 ubiquitin-protein ligase Hakai (Homo sapiens (Human)).